Reading from the N-terminus, the 352-residue chain is UDP-N-acetylglucosamine--N-acetylmuramyl-(pentapeptide) pyrophosphoryl-undecaprenol N-acetylglucosamine transferase 2 (352 aa).

UDP-N-acetyl-alpha-D-glucosamine-binding positions include 11-13, Arg-164, Ser-194, and Gln-289; that span reads SAG.

It belongs to the glycosyltransferase 28 family. MurG subfamily.

The protein resides in the cell membrane. It carries out the reaction di-trans,octa-cis-undecaprenyl diphospho-N-acetyl-alpha-D-muramoyl-L-alanyl-D-glutamyl-meso-2,6-diaminopimeloyl-D-alanyl-D-alanine + UDP-N-acetyl-alpha-D-glucosamine = di-trans,octa-cis-undecaprenyl diphospho-[N-acetyl-alpha-D-glucosaminyl-(1-&gt;4)]-N-acetyl-alpha-D-muramoyl-L-alanyl-D-glutamyl-meso-2,6-diaminopimeloyl-D-alanyl-D-alanine + UDP + H(+). The protein operates within cell wall biogenesis; peptidoglycan biosynthesis. Its function is as follows. Cell wall formation. Catalyzes the transfer of a GlcNAc subunit on undecaprenyl-pyrophosphoryl-MurNAc-pentapeptide (lipid intermediate I) to form undecaprenyl-pyrophosphoryl-MurNAc-(pentapeptide)GlcNAc (lipid intermediate II). In Bacillus thuringiensis subsp. konkukian (strain 97-27), this protein is UDP-N-acetylglucosamine--N-acetylmuramyl-(pentapeptide) pyrophosphoryl-undecaprenol N-acetylglucosamine transferase 2.